The chain runs to 251 residues: MPANAPLLQFTPPLQPATLILRYKRFLADIVTPAGEALTIHCANTGAMTGCATPGDTIWYSTSDNPKRKYPQSWELTQTQTGDWICVNTMRANELVNLAIEKNQIAELSGYNFVRKEVKYGEENSRIDLLLQAEDRRDCYIEVKSVTLLQQQCGYFPDAVTLRGQKHLRELQNRVVNGHRAVLFFAVLHTGIKQVAPARHIDRRYAELLVQAQQAGVEVICYGFQLSPDGIALNTRLPLLLDEMLSSENAE.

It belongs to the SfsA family.

This chain is Sugar fermentation stimulation protein homolog, found in Yersinia pseudotuberculosis serotype O:1b (strain IP 31758).